The sequence spans 244 residues: S-adenosyl-L-methionine-dependent Diels-Alderase iliD (244 aa).

The protein belongs to the class I-like SAM-binding methyltransferase superfamily. Erg6/SMT family. Requires S-adenosyl-L-methionine as cofactor.

It carries out the reaction 3-[(2E,4E,8S,10E,12Z)-4,8-dimethyltetradeca-2,4,10,12-tetraenoyl]-4-hydroxy-5-(4-hydroxyphenyl)-1,2-dihydropyridin-2-one = ilicicolin H. It functions in the pathway mycotoxin biosynthesis. S-adenosyl-l-methionine-dependent Diels-Alderase; part of the gene cluster that mediates the biosynthesis of ilicicolin H, a 4-hydroxy-2-pyridonealkaloid that has potent and broad antifungal activities by inhibiting the mitochondrial respiration chain. IliD catalyzes the Diels-Alder reaction that converts the acyclic 2-pyridone intermediate to 8-epi-ilicicolin H. The biosynthesis of ilicicolin H starts with formation of the tetramic acid by the hybrid PKS-NRPS synthetase iliA with the partnering trans-enoyl reductase iliB since iliA lacks a designated enoylreductase (ER) domain. The cytochrome P450 monooxygenase iliC then catalyzes the ring expansion of the tetramate to the acyclic 2-pyridone. The pericyclase iliD further converts the acyclic 2-pyridone into 8-epi-ilicicolin H. 8-epi-ilicicolin H might then spontaneously convert to ilicicolin H since ilicicolin H is produced in the absence of the epimerase iliE, in contrast to what was observed for the Talaromyces variabilis ilicolin H biosynthetic pathway. In Neonectria sp. (strain DH2), this protein is S-adenosyl-L-methionine-dependent Diels-Alderase iliD.